Consider the following 658-residue polypeptide: Putative arrestin-related trafficking adapter C2D10.04 (658 aa).

2 disordered regions span residues 21 to 107 and 638 to 658; these read LHHQ…LTWS and REEAPHRSLSRTVSRSFEIPR. The span at 39–81 shows a compositional bias: low complexity; it reads NRSSNSGLNRRNSVFGLPSSGLSSRLSKPSLSSINNSNNSSSN. A compositionally biased stretch (polar residues) spans 96-107; it reads RNMSNKPPLTWS. Residue Ser-653 is modified to Phosphoserine.

Belongs to the ALY1 family.

Its subcellular location is the cytoplasm. Functionally, may regulate endocytosis in response to extracellular stimuli. This chain is Putative arrestin-related trafficking adapter C2D10.04, found in Schizosaccharomyces pombe (strain 972 / ATCC 24843) (Fission yeast).